A 126-amino-acid polypeptide reads, in one-letter code: Prefoldin subunit beta (126 aa).

The protein belongs to the prefoldin subunit beta family. In terms of assembly, heterohexamer of two alpha and four beta subunits.

It localises to the cytoplasm. In terms of biological role, molecular chaperone capable of stabilizing a range of proteins. Seems to fulfill an ATP-independent, HSP70-like function in archaeal de novo protein folding. The protein is Prefoldin subunit beta (pfdB) of Pyrobaculum aerophilum (strain ATCC 51768 / DSM 7523 / JCM 9630 / CIP 104966 / NBRC 100827 / IM2).